The sequence spans 237 residues: DNA repair protein RecO (237 aa).

It belongs to the RecO family.

Involved in DNA repair and RecF pathway recombination. This chain is DNA repair protein RecO, found in Rickettsia felis (strain ATCC VR-1525 / URRWXCal2) (Rickettsia azadi).